The chain runs to 317 residues: Melanocyte-stimulating hormone receptor (317 aa).

Residues 1–37 are Extracellular-facing; sequence MPMQEPQRRLLDPFNSTRTGTPHLKLSANQTGPWCLH. 2 N-linked (GlcNAc...) asparagine glycosylation sites follow: N15 and N29. The helical transmembrane segment at 38–63 threads the bilayer; the sequence is VSIPDGLFLSLGLVSLVENVLVVISI. Topologically, residues 64–72 are cytoplasmic; it reads AKNRNLHSP. A helical transmembrane segment spans residues 73–93; the sequence is MYYFICCLALSDLLVSVSIVL. Over 94 to 118 the chain is Extracellular; sequence ETTLILVLEAGALATRVTVVQQLDN. A helical membrane pass occupies residues 119–140; it reads VIDVLICGSMVSSLCFLGAIAV. Residues 141-163 lie on the Cytoplasmic side of the membrane; it reads DRYISIFYALRYHSIVTLPRARW. Residues 164-183 form a helical membrane-spanning segment; sequence AIVAIWVASISSSTLFVAYY. Residues 184 to 191 lie on the Extracellular side of the membrane; that stretch reads NHTAVLLC. Residues 192-211 traverse the membrane as a helical segment; the sequence is LVTFFLATLALMAVLYVHML. Over 212 to 240 the chain is Cytoplasmic; sequence ARAHQHAQAIAQLHKRQHLVHQGFRLKGA. A helical transmembrane segment spans residues 241 to 266; the sequence is ATLTILLGIFFLCWGPFFLYLTLIVL. Residues 267-279 lie on the Extracellular side of the membrane; sequence CPKHPTCSCFFKN. Residues 280-300 traverse the membrane as a helical segment; it reads LNLFLALIIFNSIVDPLIYAF. Residues 301 to 317 lie on the Cytoplasmic side of the membrane; it reads RSQELRMTLKEVLLCSW. C315 is lipidated: S-palmitoyl cysteine.

Belongs to the G-protein coupled receptor 1 family. Interacts with MGRN1, but does not undergo MGRN1-mediated ubiquitination; this interaction competes with GNAS-binding and thus inhibits agonist-induced cAMP production. Interacts with OPN3; the interaction results in a decrease in MC1R-mediated cAMP signaling and ultimately a decrease in melanin production in melanocytes.

It is found in the cell membrane. Receptor for MSH (alpha, beta and gamma) and ACTH. The activity of this receptor is mediated by G proteins which activate adenylate cyclase. Mediates melanogenesis, the production of eumelanin (black/brown) and phaeomelanin (red/yellow), via regulation of cAMP signaling in melanocytes. This chain is Melanocyte-stimulating hormone receptor (MC1R), found in Chaetodipus baileyi (Bailey's pocket mouse).